We begin with the raw amino-acid sequence, 193 residues long: RNA polymerase sigma-H factor (193 aa).

Positions 49-62 (DVAQEAFIKAYRAL) match the Polymerase core binding motif. Residues 157–176 (YEDIATVMQCPVGTVRSRIF) constitute a DNA-binding region (H-T-H motif).

This sequence belongs to the sigma-70 factor family. ECF subfamily.

Its function is as follows. Sigma factors are initiation factors that promote the attachment of RNA polymerase to specific initiation sites and are then released. This sigma factor regulates genes such as algD, involved in alginate biosynthesis. This is RNA polymerase sigma-H factor (algU) from Pseudomonas aeruginosa (strain ATCC 15692 / DSM 22644 / CIP 104116 / JCM 14847 / LMG 12228 / 1C / PRS 101 / PAO1).